A 534-amino-acid polypeptide reads, in one-letter code: Solute carrier family 22 member 15 (534 aa).

Residues 22 to 42 traverse the membrane as a helical segment; it reads FLLAVLLQLYSATEAIIITIL. N-linked (GlcNAc...) asparagine glycans are attached at residues Asn52, Asn58, and Asn83. 11 consecutive transmembrane segments (helical) span residues 97-117, 136-156, 161-181, 191-211, 216-236, 297-317, 327-347, 356-376, 391-411, 424-444, and 450-470; these read AAYE…IGVI, LALE…PLFL, LVGV…NECI, SLGS…GYFI, LLAL…LCIP, TLIM…LTLS, LNLA…MYLI, GSLA…MLVP, TLSL…YIYS, MGVC…IPAL, and ALPF…SLLL. An N-linked (GlcNAc...) asparagine glycan is attached at Asn513.

Belongs to the major facilitator (TC 2.A.1) superfamily. Organic cation transporter (TC 2.A.1.19) family.

The protein localises to the membrane. Its function is as follows. Probably transports organic cations. This is Solute carrier family 22 member 15 (slc22a15) from Xenopus tropicalis (Western clawed frog).